Consider the following 250-residue polypeptide: MRRKIVVGNWKMNKTVAESTALATAVIAALGDGCSACEAGIAPTYPALDAVGRALEGSGIALVAQNCHYEDDGAYTGEVSTGMLKAVGCSYVIIGHSERRQYFGETDETVNLRIKKVLASGMKVILCVGETLAEREEGVTGTVVSRQVTEGLKGVADITDLVIAYEPVWAIGTGKTASSDQAQEVHRLIRDTVKGMYGAEVSEAVRIQYGGSVKASNAEELFAMPDIDGGLIGGASLNAADFAAIVKAGC.

Asn9–Lys11 is a substrate binding site. Residue His96 is the Electrophile of the active site. Glu166 (proton acceptor) is an active-site residue. Substrate is bound by residues Gly172, Ser212, and Gly233–Gly234.

This sequence belongs to the triosephosphate isomerase family. In terms of assembly, homodimer.

It localises to the cytoplasm. It catalyses the reaction D-glyceraldehyde 3-phosphate = dihydroxyacetone phosphate. It functions in the pathway carbohydrate biosynthesis; gluconeogenesis. Its pathway is carbohydrate degradation; glycolysis; D-glyceraldehyde 3-phosphate from glycerone phosphate: step 1/1. Involved in the gluconeogenesis. Catalyzes stereospecifically the conversion of dihydroxyacetone phosphate (DHAP) to D-glyceraldehyde-3-phosphate (G3P). This is Triosephosphate isomerase from Chlorobium luteolum (strain DSM 273 / BCRC 81028 / 2530) (Pelodictyon luteolum).